Reading from the N-terminus, the 400-residue chain is Phosphoglycerate kinase (400 aa).

Substrate-binding positions include 22-24 (DFN), Arg38, 61-64 (HLGR), Arg119, and Arg152. ATP contacts are provided by residues Lys205, Gly296, Glu327, and 353–356 (GGDT).

Belongs to the phosphoglycerate kinase family. In terms of assembly, monomer.

It localises to the cytoplasm. It catalyses the reaction (2R)-3-phosphoglycerate + ATP = (2R)-3-phospho-glyceroyl phosphate + ADP. It participates in carbohydrate degradation; glycolysis; pyruvate from D-glyceraldehyde 3-phosphate: step 2/5. The sequence is that of Phosphoglycerate kinase from Campylobacter jejuni subsp. jejuni serotype O:2 (strain ATCC 700819 / NCTC 11168).